The primary structure comprises 966 residues: Alanine--tRNA ligase (966 aa).

His-646, His-650, Cys-750, and His-754 together coordinate Zn(2+). Residues 927–949 (DRLGGGGGGRPSLASAGGRDPEA) form a disordered region.

The protein belongs to the class-II aminoacyl-tRNA synthetase family. It depends on Zn(2+) as a cofactor.

Its subcellular location is the cytoplasm. The enzyme catalyses tRNA(Ala) + L-alanine + ATP = L-alanyl-tRNA(Ala) + AMP + diphosphate. Its function is as follows. Catalyzes the attachment of alanine to tRNA(Ala) in a two-step reaction: alanine is first activated by ATP to form Ala-AMP and then transferred to the acceptor end of tRNA(Ala). Also edits incorrectly charged Ser-tRNA(Ala) and Gly-tRNA(Ala) via its editing domain. The chain is Alanine--tRNA ligase from Salinibacter ruber (strain DSM 13855 / M31).